The chain runs to 411 residues: Citrate synthase (411 aa).

Residues H304 and D363 contribute to the active site.

The protein belongs to the citrate synthase family.

The enzyme catalyses oxaloacetate + acetyl-CoA + H2O = citrate + CoA + H(+). It participates in carbohydrate metabolism; tricarboxylic acid cycle; isocitrate from oxaloacetate: step 1/2. This Rickettsia helvetica protein is Citrate synthase (gltA).